We begin with the raw amino-acid sequence, 510 residues long: NAD(P)H-quinone oxidoreductase subunit 2 A, chloroplastic (510 aa).

13 helical membrane passes run 24-44, 57-77, 99-119, 124-144, 149-169, 183-203, 227-247, 295-315, 323-343, 354-374, 395-415, 418-438, and 484-504; these read LLLF…GLIL, IPWL…ALLF, IFQF…VEYI, MAIT…MFLC, LITI…LSGY, YLLM…WLYG, PGIS…LSPA, WHLL…LIAI, MLAY…IVGD, YMLF…SFGL, ALSL…AGFF, LHLF…IGLL, and MIVC…IIAI.

This sequence belongs to the complex I subunit 2 family. NDH is composed of at least 16 different subunits, 5 of which are encoded in the nucleus.

It localises to the plastid. The protein resides in the chloroplast thylakoid membrane. It carries out the reaction a plastoquinone + NADH + (n+1) H(+)(in) = a plastoquinol + NAD(+) + n H(+)(out). The catalysed reaction is a plastoquinone + NADPH + (n+1) H(+)(in) = a plastoquinol + NADP(+) + n H(+)(out). Functionally, NDH shuttles electrons from NAD(P)H:plastoquinone, via FMN and iron-sulfur (Fe-S) centers, to quinones in the photosynthetic chain and possibly in a chloroplast respiratory chain. The immediate electron acceptor for the enzyme in this species is believed to be plastoquinone. Couples the redox reaction to proton translocation, and thus conserves the redox energy in a proton gradient. The sequence is that of NAD(P)H-quinone oxidoreductase subunit 2 A, chloroplastic from Carica papaya (Papaya).